A 406-amino-acid polypeptide reads, in one-letter code: Tyrosine--tRNA ligase (406 aa).

An L-tyrosine-binding site is contributed by tyrosine 35. The short motif at 40–49 is the 'HIGH' region element; that stretch reads ATSASLHIGH. Residues tyrosine 167 and glutamine 171 each coordinate L-tyrosine. Positions 227–231 match the 'KMSKS' region motif; the sequence is KMGKS. Lysine 230 is an ATP binding site. One can recognise an S4 RNA-binding domain in the interval 341-405; it reads ILLVDLMVLA…IGKKKILRIV (65 aa).

It belongs to the class-I aminoacyl-tRNA synthetase family. TyrS type 1 subfamily. In terms of assembly, homodimer.

The protein localises to the cytoplasm. It catalyses the reaction tRNA(Tyr) + L-tyrosine + ATP = L-tyrosyl-tRNA(Tyr) + AMP + diphosphate + H(+). Catalyzes the attachment of tyrosine to tRNA(Tyr) in a two-step reaction: tyrosine is first activated by ATP to form Tyr-AMP and then transferred to the acceptor end of tRNA(Tyr). The polypeptide is Tyrosine--tRNA ligase (Borrelia duttonii (strain Ly)).